The sequence spans 353 residues: Melanin-concentrating hormone receptor 1 (353 aa).

The disordered stretch occupies residues 1 to 29; that stretch reads MDLEASLLPTGPNASNTSDGPDNLTSAGS. Topologically, residues 1–44 are extracellular; it reads MDLEASLLPTGPNASNTSDGPDNLTSAGSPPRTGSISYINIIMP. The segment covering 12-29 has biased composition (polar residues); the sequence is PNASNTSDGPDNLTSAGS. Residues Asn-13, Asn-16, and Asn-23 are each glycosylated (N-linked (GlcNAc...) asparagine). Residues 45 to 67 traverse the membrane as a helical segment; the sequence is SVFGTICLLGIIGNSTVIFAVVK. Topologically, residues 68 to 79 are cytoplasmic; sequence KSKLHWCNNVPD. The helical transmembrane segment at 80 to 102 threads the bilayer; that stretch reads IFIINLSVVDLLFLLGMPFMIHQ. The Extracellular portion of the chain corresponds to 103–116; sequence LMGNGVWHFGETMC. Residues Cys-116 and Cys-194 are joined by a disulfide bond. Residues 117 to 139 traverse the membrane as a helical segment; the sequence is TLITAMDANSQFTSTYILTAMAI. Residues 140 to 158 lie on the Cytoplasmic side of the membrane; sequence DRYLATVHPISSTKFRKPS. Residues 159-181 traverse the membrane as a helical segment; the sequence is VATLVICLLWALSFISITPVWLY. At 182 to 209 the chain is on the extracellular side; it reads ARLIPFPGGAVGCGIRLPNPDTDLYWFT. Residues 210–232 traverse the membrane as a helical segment; that stretch reads LYQFFLAFALPFVVITAAYVRIL. Residues 233–252 lie on the Cytoplasmic side of the membrane; it reads QRMTSSVAPASQRSIRLRTK. The chain crosses the membrane as a helical span at residues 253–275; that stretch reads RVTRTAIAICLVFFVCWAPYYVL. Topologically, residues 276-289 are extracellular; that stretch reads QLTQLSISRPTLTF. A helical transmembrane segment spans residues 290–312; that stretch reads VYLYNAAISLGYANSCLNPFVYI. Over 313–353 the chain is Cytoplasmic; sequence VLCETFRKRLVLSVKPAAQGQLRAVSNAQTADEERTESKGT.

This sequence belongs to the G-protein coupled receptor 1 family. As to quaternary structure, interacts with NCDN. In terms of tissue distribution, highest level in brain, particularly in the frontal cortex and hypothalamus, lower levels in the liver and heart.

Its subcellular location is the cell membrane. Functionally, receptor for melanin-concentrating hormone, coupled to both G proteins that inhibit adenylyl cyclase and G proteins that activate phosphoinositide hydrolysis. The chain is Melanin-concentrating hormone receptor 1 from Homo sapiens (Human).